The following is a 262-amino-acid chain: Phosphatidylglycerol--prolipoprotein diacylglyceryl transferase (262 aa).

Helical transmembrane passes span 9–29 (LGPL…ILAV), 41–61 (IIPD…ILGA), 80–100 (IFAI…GALV), and 109–129 (LINT…AQSL). Arginine 131 lines the a 1,2-diacyl-sn-glycero-3-phospho-(1'-sn-glycerol) pocket. 3 consecutive transmembrane segments (helical) span residues 167 to 187 (QPTF…ILIF), 197 to 217 (GHIT…IEGM), and 226 to 246 (GLRV…MIVI).

The protein belongs to the Lgt family.

It localises to the cell membrane. The catalysed reaction is L-cysteinyl-[prolipoprotein] + a 1,2-diacyl-sn-glycero-3-phospho-(1'-sn-glycerol) = an S-1,2-diacyl-sn-glyceryl-L-cysteinyl-[prolipoprotein] + sn-glycerol 1-phosphate + H(+). Its pathway is protein modification; lipoprotein biosynthesis (diacylglyceryl transfer). Its function is as follows. Catalyzes the transfer of the diacylglyceryl group from phosphatidylglycerol to the sulfhydryl group of the N-terminal cysteine of a prolipoprotein, the first step in the formation of mature lipoproteins. The sequence is that of Phosphatidylglycerol--prolipoprotein diacylglyceryl transferase from Streptococcus pneumoniae (strain P1031).